The sequence spans 193 residues: Xanthine phosphoribosyltransferase (193 aa).

The xanthine site is built by Leu20 and Thr27. Residue 128-132 (ANGQA) participates in 5-phospho-alpha-D-ribose 1-diphosphate binding. Lys156 provides a ligand contact to xanthine.

The protein belongs to the purine/pyrimidine phosphoribosyltransferase family. Xpt subfamily. As to quaternary structure, homodimer.

Its subcellular location is the cytoplasm. It carries out the reaction XMP + diphosphate = xanthine + 5-phospho-alpha-D-ribose 1-diphosphate. It participates in purine metabolism; XMP biosynthesis via salvage pathway; XMP from xanthine: step 1/1. Its function is as follows. Converts the preformed base xanthine, a product of nucleic acid breakdown, to xanthosine 5'-monophosphate (XMP), so it can be reused for RNA or DNA synthesis. The sequence is that of Xanthine phosphoribosyltransferase from Streptococcus pneumoniae (strain P1031).